Here is a 263-residue protein sequence, read N- to C-terminus: Fructose-bisphosphate aldolase class 1 (263 aa).

Residues 24–25 (DH), His29, Asp33, and Trp144 each bind substrate. Tyr146 serves as the catalytic Proton donor. Substrate is bound by residues Arg148, 177-179 (KIK), 202-204 (SGG), and 231-232 (GR). Residue Lys177 is the Schiff-base intermediate with dihydroxyacetone-P of the active site.

This sequence belongs to the DeoC/FbaB aldolase family. As to quaternary structure, homodecamer (dimer of pentamers).

Its subcellular location is the cytoplasm. The enzyme catalyses beta-D-fructose 1,6-bisphosphate = D-glyceraldehyde 3-phosphate + dihydroxyacetone phosphate. With respect to regulation, activated by citrate. Its function is as follows. Catalyzes the reversible cleavage of fructose 1,6-bisphosphate (FBP) to glyceraldehyde 3-phosphate (GAP) and dihydroxyacetone phosphate (DHAP). The sequence is that of Fructose-bisphosphate aldolase class 1 (fba) from Thermoproteus tenax (strain ATCC 35583 / DSM 2078 / JCM 9277 / NBRC 100435 / Kra 1).